The chain runs to 145 residues: MAKKVVATIELMLPAQQASPAPPVGPALGQHGVNIMEFVKQFNAASRDYEPGTILPVVITVYQDRSFTFIMKTPPVSYLLKKAAGVEKGSSDPKRVKVGKITVKQLEEIAKMKMKDMNTRDLKAAMRTVAGTAKSMGIEIEGWKE.

The protein belongs to the universal ribosomal protein uL11 family. Part of the ribosomal stalk of the 50S ribosomal subunit. Interacts with L10 and the large rRNA to form the base of the stalk. L10 forms an elongated spine to which L12 dimers bind in a sequential fashion forming a multimeric L10(L12)X complex. One or more lysine residues are methylated.

Its function is as follows. Forms part of the ribosomal stalk which helps the ribosome interact with GTP-bound translation factors. The protein is Large ribosomal subunit protein uL11 of Aquifex aeolicus (strain VF5).